The chain runs to 349 residues: tRNA N6-adenosine threonylcarbamoyltransferase (349 aa).

The Fe cation site is built by H116 and H120. Residues 139 to 143 (LVSGG), D172, G185, and N283 contribute to the substrate site. D311 contributes to the Fe cation binding site.

Belongs to the KAE1 / TsaD family. Fe(2+) serves as cofactor.

It localises to the cytoplasm. It catalyses the reaction L-threonylcarbamoyladenylate + adenosine(37) in tRNA = N(6)-L-threonylcarbamoyladenosine(37) in tRNA + AMP + H(+). Required for the formation of a threonylcarbamoyl group on adenosine at position 37 (t(6)A37) in tRNAs that read codons beginning with adenine. Is involved in the transfer of the threonylcarbamoyl moiety of threonylcarbamoyl-AMP (TC-AMP) to the N6 group of A37, together with TsaE and TsaB. TsaD likely plays a direct catalytic role in this reaction. This Colwellia psychrerythraea (strain 34H / ATCC BAA-681) (Vibrio psychroerythus) protein is tRNA N6-adenosine threonylcarbamoyltransferase.